Reading from the N-terminus, the 211-residue chain is Arginine exporter protein ArgO (211 aa).

The next 6 membrane-spanning stretches (helical) occupy residues 1–21 (MISY…PLGP), 37–57 (LMIA…GIFG), 68–88 (LLAL…FGAL), 111–131 (IIAT…DTFV), 147–167 (WFAL…ALLA), and 179–199 (AQRI…FQLA).

Belongs to the LysE/ArgO transporter (TC 2.A.75) family.

It localises to the cell inner membrane. The enzyme catalyses L-arginine(in) = L-arginine(out). Its function is as follows. Involved in the export of arginine. Important to control the intracellular level of arginine and the correct balance between arginine and lysine. This is Arginine exporter protein ArgO from Salmonella typhimurium (strain LT2 / SGSC1412 / ATCC 700720).